An 878-amino-acid chain; its full sequence is Alanine--tRNA ligase (878 aa).

Zn(2+) contacts are provided by H567, H571, C668, and H672.

The protein belongs to the class-II aminoacyl-tRNA synthetase family. Requires Zn(2+) as cofactor.

The protein resides in the cytoplasm. It carries out the reaction tRNA(Ala) + L-alanine + ATP = L-alanyl-tRNA(Ala) + AMP + diphosphate. Functionally, catalyzes the attachment of alanine to tRNA(Ala) in a two-step reaction: alanine is first activated by ATP to form Ala-AMP and then transferred to the acceptor end of tRNA(Ala). Also edits incorrectly charged Ser-tRNA(Ala) and Gly-tRNA(Ala) via its editing domain. This is Alanine--tRNA ligase from Magnetococcus marinus (strain ATCC BAA-1437 / JCM 17883 / MC-1).